The following is a 1682-amino-acid chain: Calmodulin-binding transcription activator 1 (1682 aa).

The CG-1 DNA-binding region spans 63–188 (KCSSLPKERH…YLNVPAIEDC (126 aa)). The Nuclear localization signal signature appears at 112–119 (RKKVKYRK). Disordered stretches follow at residues 284–375 (RIIS…MVDS) and 599–622 (SSFSQTGHSPHIHQTPSPSFFLQD). The segment covering 302 to 327 (EVQHNDVSEGKHEPSHGRSTSREKRN) has biased composition (basic and acidic residues). Composition is skewed to polar residues over residues 337–367 (HQNSTEVSSTNQVEVPDTTQSSPVSISSGLN) and 599–618 (SSFSQTGHSPHIHQTPSPSF). The region spanning 877–955 (DYSPEWSYPE…ISNSVVFEYK (79 aa)) is the IPT/TIG domain. The segment at 992–1020 (MAEMTGSQQHKQASGGGGSGSGSGSGAGG) is disordered. The segment covering 1005-1020 (SGGGGSGSGSGSGAGG) has biased composition (gly residues). 3 ANK repeats span residues 1066 to 1095 (RGMTLLHLAAAQGYATLIQTLIKWRTKHAD), 1111 to 1141 (FSCTPLMWACALGHLEAAVVLYKWDRRAISI), and 1145 to 1174 (LGRLPLGIARSRGHVKLAECLEHLQRDEQA). 2 disordered regions span residues 1217–1249 (ASTNPELRRPRSEPSNYYSTEGHKDYPAPKKHK) and 1267–1318 (LSLE…SASQ). Residues 1268–1291 (SLEQPNIRKQSPRSKQPSPETISP) are compositionally biased toward polar residues. The span at 1308–1318 (ETAASQASASQ) shows a compositional bias: low complexity. 3 IQ domains span residues 1549–1585 (QEVAAAVIQRCYRKYKQLTWIALKYALYKKMTQAAIL), 1586–1608 (IQSKFRSYYEQKRFQQSRRAAVL), and 1609–1631 (IQNFYRSYKKCGRRRPARRTAVI).

Belongs to the CAMTA family. May interact with calmodulin.

The protein resides in the nucleus. It is found in the cytoplasm. Functionally, transcriptional activator. This chain is Calmodulin-binding transcription activator 1, found in Mus musculus (Mouse).